Consider the following 109-residue polypeptide: ATPase inhibitor, mitochondrial (109 aa).

The N-terminal 25 residues, 1–25 (MAATALAARTRQAVWSVWAMQGRGF), are a transit peptide targeting the mitochondrion. Residues 26–52 (GSESGDNVRSSAGAVRDAGGAFGKREQ) form a disordered region. Residues 26–52 (GSESGDNVRSSAGAVRDAGGAFGKREQ) are N-terminal inhibitory region. Residues 69-109 (ALKKHHENEISHHAKEIERLQKEIERHKQSIKKLKQSEDDD) adopt a coiled-coil conformation. Positions 74–106 (HENEISHHAKEIERLQKEIERHKQSIKKLKQSE) are antiparallel alpha-helical coiled coil region. Position 103 is an N6-succinyllysine (Lys-103).

The protein belongs to the ATPase inhibitor family. In terms of assembly, homodimer; represents the active form and is present at a pH value below 6.5. Homotetramer; represents the inactive form and is present at a pH value above 7.0.

It is found in the mitochondrion. Functionally, endogenous F(1)F(o)-ATPase inhibitor limiting ATP depletion when the mitochondrial membrane potential falls below a threshold and the F(1)F(o)-ATP synthase starts hydrolyzing ATP to pump protons out of the mitochondrial matrix. Required to avoid the consumption of cellular ATP when the F(1)F(o)-ATP synthase enzyme acts as an ATP hydrolase. Indirectly acts as a regulator of heme synthesis in erythroid tissues: regulates heme synthesis by modulating the mitochondrial pH and redox potential, allowing FECH to efficiently catalyze the incorporation of iron into protoporphyrin IX to produce heme. The protein is ATPase inhibitor, mitochondrial of Bos taurus (Bovine).